We begin with the raw amino-acid sequence, 887 residues long: 3-hydroxy-3-methylglutaryl-coenzyme A reductase (887 aa).

The Cytoplasmic segment spans residues 1 to 9; that stretch reads MLSRLFRMH. The helical transmembrane segment at 10-39 threads the bilayer; the sequence is GLFVASHPWEVIVGTVTLTICMMSMNMFTG. Over 40–56 the chain is Lumenal; it reads NNKICGWNYECPKFEED. Residues 57–78 traverse the membrane as a helical segment; sequence VLSSDIIILTITRCIAILYIYF. The SSD domain occupies 61–218; it reads DIIILTITRC…MTFFPACVSL (158 aa). Residues 75 to 78 carry the INSIG-binding motif motif; the sequence is YIYF. Topologically, residues 79–89 are cytoplasmic; it reads QFQNLRQLGSK. Lys-89 participates in a covalent cross-link: Glycyl lysine isopeptide (Lys-Gly) (interchain with G-Cter in ubiquitin). A helical transmembrane segment spans residues 90–114; that stretch reads YILGIAGLFTIFSSFVFSTVVIHFL. The Lumenal portion of the chain corresponds to 115–123; sequence DKELTGLNE. Residues 124 to 149 form a helical membrane-spanning segment; sequence ALPFFLLLIDLSRASALAKFALSSNS. The Cytoplasmic segment spans residues 150–159; sequence QDEVRENIAR. The chain crosses the membrane as a helical span at residues 160–187; that stretch reads GMAILGPTFTLDALVECLVIGVGTMSGV. Residues 188–191 are Lumenal-facing; the sequence is RQLE. The chain crosses the membrane as a helical span at residues 192 to 220; sequence IMCCFGCMSVLANYFVFMTFFPACVSLVL. At 221–248 the chain is on the cytoplasmic side; that stretch reads ELSRESREGRPIWQLSHFARVLEEEENK. Lys-248 is covalently cross-linked (Glycyl lysine isopeptide (Lys-Gly) (interchain with G-Cter in ubiquitin)). The helical transmembrane segment at 249 to 275 threads the bilayer; sequence PNPVTQRVKMIMSLGLVLVHAHSRWIA. Topologically, residues 276–314 are lumenal; it reads DPSPQNSTAEQSKVSLGLAEDVSKRIEPSVSLWQFYLSK. N-linked (GlcNAc...) asparagine glycosylation occurs at Asn-281. A helical transmembrane segment spans residues 315-339; it reads MISMDIEQVITLSLALLLAVKYIFF. At 340–887 the chain is on the cytoplasmic side; the sequence is EQAETESTLS…LQGTCTKKAA (548 aa). Residues Glu-558, Lys-690, and Asp-766 each act as charge relay system in the active site. His-865 (proton donor) is an active-site residue. Ser-871 is modified (phosphoserine; by AMPK).

It belongs to the HMG-CoA reductase family. In terms of assembly, homotetramer. Homodimer. Interacts (via its SSD) with INSIG1; the interaction, accelerated by sterols, leads to the recruitment of HMGCR to AMFR/gp78 for its ubiquitination by the sterol-mediated ERAD pathway. Interacts with UBIAD1. Post-translationally, undergoes sterol-mediated ubiquitination and ER-associated degradation (ERAD). Accumulation of sterols in the endoplasmic reticulum (ER) membrane, triggers binding of the reductase to the ER membrane protein INSIG1 or INSIG2. The INSIG1 binding leads to the recruitment of the ubiquitin ligase, AMFR/gp78, RNF139 or RNF145, initiating ubiquitination of the reductase. The ubiquitinated reductase is then extracted from the ER membrane and delivered to cytosolic 26S proteosomes by a mechanism probably mediated by the ATPase Valosin-containing protein VCP/p97. The INSIG2-binding leads to the recruitment of the ubiquitin ligase RNF139, initiating ubiquitination of the reductase. Lys-248 is the main site of ubiquitination. Ubiquitination is enhanced by the presence of a geranylgeranylated protein. In terms of processing, N-glycosylated. Deglycosylated by NGLY1 on release from the endoplasmic reticulum (ER) in a sterol-mediated manner. Phosphorylated. Phosphorylation at Ser-871 reduces the catalytic activity.

It localises to the endoplasmic reticulum membrane. The protein localises to the peroxisome membrane. It catalyses the reaction (R)-mevalonate + 2 NADP(+) + CoA = (3S)-3-hydroxy-3-methylglutaryl-CoA + 2 NADPH + 2 H(+). It participates in metabolic intermediate biosynthesis; (R)-mevalonate biosynthesis; (R)-mevalonate from acetyl-CoA: step 3/3. Its activity is regulated as follows. Regulated by a negative feedback mechanism through sterols and non-sterol metabolites derived from mevalonate. Phosphorylation at Ser-871 down-regulates the catalytic activity. Its function is as follows. Catalyzes the conversion of (3S)-hydroxy-3-methylglutaryl-CoA (HMG-CoA) to mevalonic acid, the rate-limiting step in the synthesis of cholesterol and other isoprenoids, thus plays a critical role in cellular cholesterol homeostasis. In Rattus norvegicus (Rat), this protein is 3-hydroxy-3-methylglutaryl-coenzyme A reductase (Hmgcr).